The primary structure comprises 624 residues: ATP-dependent zinc metalloprotease FtsH (624 aa).

Over 1 to 7 the chain is Cytoplasmic; it reads MPRAPFS. The chain crosses the membrane as a helical span at residues 8–28; it reads LLALVLGLAFLAWAFSLAGTV. Over 29-103 the chain is Periplasmic; sequence GAPSGTVNYT…VRVEPPQGQN (75 aa). The chain crosses the membrane as a helical span at residues 104 to 124; the sequence is ALGFLWPLLLVGLLIGALYYF. The Cytoplasmic portion of the chain corresponds to 125 to 624; that stretch reads SRNGRAGPSD…VKPGGALGGA (500 aa). ATP is bound by residues alanine 159, 199–203, and histidine 204; that span reads GVGKT. Histidine 418 lines the Zn(2+) pocket. The active site involves glutamate 419. Positions 422 and 493 each coordinate Zn(2+). Residues 595–624 form a disordered region; the sequence is PLEAPEEAREEREPPRVVPKVKPGGALGGA. Residues 600–609 are compositionally biased toward basic and acidic residues; it reads EEAREEREPP.

The protein in the central section; belongs to the AAA ATPase family. This sequence in the C-terminal section; belongs to the peptidase M41 family. The isolated soluble domain (residues 126-624) forms a stable hexamer in which the AAA+ domains (residues 126-400) are alternatively open or closed. It depends on Zn(2+) as a cofactor.

The protein resides in the cell inner membrane. With respect to regulation, the proteolytic activity is dependent on ATP, both the ATPase and protease activities are inhibited by ADP. Functionally, acts as a processive, ATP-dependent zinc metallopeptidase for both cytoplasmic and membrane proteins. Plays a role in the quality control of integral membrane proteins. Degrades preferentially unfolded substrates in a processive, ATP-dependent manner, usually after hydrophobic residues. This is ATP-dependent zinc metalloprotease FtsH from Thermus thermophilus (strain ATCC 27634 / DSM 579 / HB8).